Consider the following 370-residue polypeptide: Peptide chain release factor 1 (370 aa).

Glutamine 239 is subject to N5-methylglutamine.

Belongs to the prokaryotic/mitochondrial release factor family. Post-translationally, methylated by PrmC. Methylation increases the termination efficiency of RF1.

Its subcellular location is the cytoplasm. In terms of biological role, peptide chain release factor 1 directs the termination of translation in response to the peptide chain termination codons UAG and UAA. This is Peptide chain release factor 1 from Bacteroides fragilis (strain ATCC 25285 / DSM 2151 / CCUG 4856 / JCM 11019 / LMG 10263 / NCTC 9343 / Onslow / VPI 2553 / EN-2).